The following is a 735-amino-acid chain: Polycomb protein sop-2 (735 aa).

The segment covering M1 to A15 has biased composition (polar residues). 3 disordered regions span residues M1–S59, A223–A288, and P300–Q534. An RNA-binding region spans residues A224–S503. Low complexity predominate over residues Y239–A288. 2 stretches are compositionally biased toward basic and acidic residues: residues D317–R355 and R389–D398. Residues S399–N413 are compositionally biased toward acidic residues. A compositionally biased stretch (basic and acidic residues) spans V450–A470. The segment covering A471–S504 has biased composition (low complexity). Positions L520–Q534 are enriched in polar residues. An SAM-like region spans residues L621–R712.

As to quaternary structure, homodimer. Interacts with ubc-9. Binds through its N-terminal region to the N-terminal region of sor-1. Post-translationally, sumoylated by ubc-9. Sumoylation is required for the transcriptional regulation of homeotic genes. In terms of tissue distribution, widely expressed. Weakly expressed in most somatic cells of 50-cell stage embryos. At 200 cell stage, it is strongly expressed. By comma stage, it is expressed in most somatic cells.

It is found in the nucleus. Its function is as follows. Polycomb group (PcG) protein. PcG proteins act by forming multiprotein complexes, which are required to maintain the transcriptionally repressive state of homeotic genes throughout development. PcG proteins are not required to initiate repression, but to maintain it during later stages of development. Also required to repress expression of other genes and for localization of sor-1. Binds RNA. This Caenorhabditis elegans protein is Polycomb protein sop-2 (sop-2).